Reading from the N-terminus, the 119-residue chain is Hemerythrin-like protein (119 aa).

Fe cation-binding residues include H26, H56, E60, H75, H79, H107, and D112.

Belongs to the hemerythrin family.

In terms of biological role, oxygen-binding protein. The oxygen-binding site contains two iron atoms. The chain is Hemerythrin-like protein (nfa1) from Naegleria fowleri (Brain eating amoeba).